We begin with the raw amino-acid sequence, 564 residues long: Mitochondrial distribution and morphology protein 34 (564 aa).

Residues 1 to 208 (MAFNFNWSPL…VPEYRDRESE (208 aa)) form the SMP-LTD domain. Disordered regions lie at residues 208-240 (ESVN…NALN), 336-397 (SGGS…SAPT), 404-423 (QFSE…PQND), 434-517 (RISQ…DPRQ), and 532-564 (IQEE…AYGH). Over residues 209–219 (SVNTLDQSSGP) the composition is skewed to polar residues. The span at 351 to 365 (SGRHPRPHGKKRKKR) shows a compositional bias: basic residues. Residues 366-376 (VVDLRRPKTTD) are compositionally biased toward basic and acidic residues. The segment covering 380 to 390 (SVSGESVFSSE) has biased composition (low complexity). 2 stretches are compositionally biased toward polar residues: residues 438–462 (GEHT…SRNS) and 477–503 (PRNS…SSAI).

The protein belongs to the MDM34 family. In terms of assembly, component of the ER-mitochondria encounter structure (ERMES) or MDM complex, composed of mmm1, mdm10, mdm12 and mdm34.

Its subcellular location is the mitochondrion outer membrane. Component of the ERMES/MDM complex, which serves as a molecular tether to connect the endoplasmic reticulum (ER) and mitochondria. Components of this complex are involved in the control of mitochondrial shape and protein biogenesis, and function in nonvesicular lipid trafficking between the ER and mitochondria. Mdm34 is required for the interaction of the ER-resident membrane protein mmm1 and the outer mitochondrial membrane-resident beta-barrel protein mdm10. The protein is Mitochondrial distribution and morphology protein 34 of Talaromyces stipitatus (strain ATCC 10500 / CBS 375.48 / QM 6759 / NRRL 1006) (Penicillium stipitatum).